Reading from the N-terminus, the 430-residue chain is Adenylosuccinate synthetase (430 aa).

Residues 13–19 (GDEGKGK) and 41–43 (GHT) each bind GTP. Catalysis depends on Asp-14, which acts as the Proton acceptor. Positions 14 and 41 each coordinate Mg(2+). Residues 14-17 (DEGK), 39-42 (NAGH), Thr-130, Arg-144, Gln-225, Thr-240, and Arg-304 each bind IMP. The active-site Proton donor is the His-42. 300–306 (ATTGRKR) is a substrate binding site. Residues Arg-306, 332–334 (KLD), and 414–416 (STG) contribute to the GTP site.

Belongs to the adenylosuccinate synthetase family. As to quaternary structure, homodimer. Mg(2+) is required as a cofactor.

The protein localises to the cytoplasm. The catalysed reaction is IMP + L-aspartate + GTP = N(6)-(1,2-dicarboxyethyl)-AMP + GDP + phosphate + 2 H(+). It functions in the pathway purine metabolism; AMP biosynthesis via de novo pathway; AMP from IMP: step 1/2. Its function is as follows. Plays an important role in the de novo pathway of purine nucleotide biosynthesis. Catalyzes the first committed step in the biosynthesis of AMP from IMP. The chain is Adenylosuccinate synthetase from Teredinibacter turnerae (strain ATCC 39867 / T7901).